The following is a 72-amino-acid chain: Translation initiation factor IF-1 (72 aa).

One can recognise an S1-like domain in the interval 1–72; it reads MAKEDCIEME…TKGRIKFRSK (72 aa).

It belongs to the IF-1 family. In terms of assembly, component of the 30S ribosomal translation pre-initiation complex which assembles on the 30S ribosome in the order IF-2 and IF-3, IF-1 and N-formylmethionyl-tRNA(fMet); mRNA recruitment can occur at any time during PIC assembly.

Its subcellular location is the cytoplasm. Functionally, one of the essential components for the initiation of protein synthesis. Stabilizes the binding of IF-2 and IF-3 on the 30S subunit to which N-formylmethionyl-tRNA(fMet) subsequently binds. Helps modulate mRNA selection, yielding the 30S pre-initiation complex (PIC). Upon addition of the 50S ribosomal subunit IF-1, IF-2 and IF-3 are released leaving the mature 70S translation initiation complex. The polypeptide is Translation initiation factor IF-1 (Francisella tularensis subsp. tularensis (strain WY96-3418)).